Here is a 260-residue protein sequence, read N- to C-terminus: Acetylglutamate kinase (260 aa).

Residues 46–47, Arg-68, and Asn-160 contribute to the substrate site; that span reads GG.

Belongs to the acetylglutamate kinase family. ArgB subfamily.

The protein resides in the cytoplasm. The enzyme catalyses N-acetyl-L-glutamate + ATP = N-acetyl-L-glutamyl 5-phosphate + ADP. The protein operates within amino-acid biosynthesis; L-arginine biosynthesis; N(2)-acetyl-L-ornithine from L-glutamate: step 2/4. Catalyzes the ATP-dependent phosphorylation of N-acetyl-L-glutamate. This is Acetylglutamate kinase from Shewanella sp. (strain W3-18-1).